Reading from the N-terminus, the 1984-residue chain is MCQAEHQVHPSEQRIRVESPKMTASRRGFNLTSQTRAHPSSGGSTSSRYGNCQRTHLIINGRHVAISLLLLVGLCGGTAAGTPGSADTRCDAGQFQCRDGGCILQAKMCDGRGDCKDSSDELDCDYRLCRPPHWFPCAQPHGACLAAELMCNGIDNCPGGEDELNCPVRPGFRFGDTAHRMRSCSKYEFMCQQDRTCIPIDFMCDGRPDCTDKSDEVAGCKQAEITCPGEGHLCANGRCLRRKQWVCDGVDDCGDGSDERGCLNLCEPQKGKFLCRNRETCLTLSEVCDGHSDCSDGSDETDLCHSKPDCDAKKCALGAKCHMMPASGAECFCPKGFRLAKFEDKCEDVDECKEQDDLCSQGCENTSGGYRCVCDAGYLLDKDNRTCRAVVYGSKEQQPLLLYTTQMTIMGMHLREDNVRNHVYQVAGNLSKVIGVAYDGSHIYWTNIQNEAESIVKANGDGSNAEILLTSGLDAPEDLAVDWLTQNIYFSDNIMRHIAVCSNDGLNCAVLVTQDVHQPRSLAVWPQKGLMFWTDWGEKPMIGRASMDGSRSRPIVSDNIEWPNGIALDMHQQRIYWVDAKLGSVQTVRPDGTGRRTVLDGMLKHPYGLAIFEDQLYWSDWATKSVHACHKFSGKDHRILAKDRTIYAVHIYHPAKQPNSPHGCENATCSHLCLLAEPEIGGHSCACPDGMRLAPDHRRCMLMEKRQRLFIGLGQVLLEIEHTAFGRHQVSKSYTLPCLINEMVYNRINGSLIIADNDQRLILEFQPESHESNVLVRSNLGNVSALAFDHLSRNLYWADTERAVIEVLSLQTRHRALIRFFPGQEVPIGLTVMPAEGYLYVVLKAKRHSHIDKIPLSGKGEQVHVFEDDLGDDDIKLVTDYETQTIFWSDSDLGRISYSNYRVPHSQIFRGKLRRPYSLAMVHHDLFWNELGTPRIYWTHKSNMGPRKVIDIMEKDDPAAIMPYVPVATPNGIPLAASSPVGQESHPCQQQNGGCSHICVGEGPYHSICLCPAGFVYRDAGNRTCVEALDCEFRCHSGECLTMNHRCNGRRDCVDNSDEMNCDEEHRRKPKVLCSPNQFACHSGEQCVDKERRCDNRKDCHDHSDEQHCEKFDKSKKCHVHQHGCDNGKCVDSSLVCDGTNDCGDNSDELLCEATSRCEPGMFQCGSGSCIAGSWECDGRIDCSDGSDEHDKCVHRSCPPDMQRCLLGQCLDRSLVCDGHNDCGDKSDELNCGTDSSTMNISCAEDQYQCTSNLKICLPSTVRCNGTTECPRGEDEADCGDVCSIYEFKCRSGRECIRREFRCDGQKDCGDGSDELSCELEKGHHNQSQIQPWSTSSRSCRPHLFDCQDGECVDLSRVCNNFPDCTNGHDEGPKCATACRSASGRQVCQHKCRATPAGAVCSCFDGYRLDADQKSCLDIDECQEQQPCAQLCENTLGGYQCQCHADFMLRQDRVSCKSLQSGATLLFSSFNEVRNLSEQPVMLNVAWSANDSRITGFDLAMHRQMGYFSAEDEGIVYQIDLQTKVIVRALGLPAPTKLSVDWVTGNVYVLSGAQEIQACSFVGRMCGRIVHVKSPRHVKHLAVDGYHARIFYIVIRTEGYGQTSSEIHMARLDGSRRDMLLQRSESFMTALTTDPHQQLLYFVDQHMRTLERISYRLKTGPMRRPEIMLQKSNALMHPSGLSVYENNAFIVNLGSVEAVQCALYGSRICHKISINVLNAQDIVVAGRSRQPQKASHPCAHAHCHGLCLQADYGYECMCGNRLVAEGERCPHGSGNEVAVLGAVNSLELEHEHEQNGHFHWLMALFVLAAGSLIAGLGYMYYQYRQRGHTDLNINMHFQNPLATLGGTKAFLEHERAEAGVGFTTETGTVSSRGSNDTFTTTSATSSFAAQQFSVPNALQRLLRPRQSASGDPMAQELLLESPSRESKLHALDGGGAGGDGDGGRGVGRQVPDILVADMDDDAAKSAGQFGGNYAGNDANARFVS.

The span at 1–19 (MCQAEHQVHPSEQRIRVES) shows a compositional bias: basic and acidic residues. The disordered stretch occupies residues 1 to 48 (MCQAEHQVHPSEQRIRVESPKMTASRRGFNLTSQTRAHPSSGGSTSSR). N-linked (GlcNAc...) asparagine glycosylation occurs at N30. The span at 30–48 (NLTSQTRAHPSSGGSTSSR) shows a compositional bias: polar residues. LDL-receptor class A domains follow at residues 89 to 125 (RCDAGQFQCRDGGCILQAKMCDGRGDCKDSSDELDCD), 128 to 167 (LCRPPHWFPCAQPHGACLAAELMCNGIDNCPGGEDELNCP), 183 to 221 (SCSKYEFMCQQDRTCIPIDFMCDGRPDCTDKSDEVAGCK), 226 to 263 (TCPGEGHLCANGRCLRRKQWVCDGVDDCGDGSDERGCL), and 265 to 305 (LCEP…DLCH). 20 disulfides stabilise this stretch: C90/C102, C97/C115, C109/C124, C129/C144, C137/C157, C151/C166, C184/C197, C191/C210, C204/C220, C227/C239, C234/C253, C247/C262, C266/C281, C275/C294, C288/C304, C310/C321, C315/C331, C352/C363, C359/C372, and C374/C387. The region spanning 306 to 343 (SKPDCDAKKCALGAKCHMMPASGAECFCPKGFRLAKFE) is the EGF-like 1 domain. One can recognise an EGF-like 2; calcium-binding domain in the interval 348–388 (DVDECKEQDDLCSQGCENTSGGYRCVCDAGYLLDKDNRTCR). Residues N365, N384, and N429 are each glycosylated (N-linked (GlcNAc...) asparagine). LDL-receptor class B repeat units lie at residues 441-485 (SHIY…DWLT), 486-528 (QNIY…WPQK), 529-572 (GLMF…DMHQ), and 573-615 (QRIY…FEDQ). Residues N666, N749, and N782 are each glycosylated (N-linked (GlcNAc...) asparagine). LDL-receptor class B repeat units follow at residues 750 to 792 (GSLI…DHLS), 793 to 836 (RNLY…MPAE), 884 to 925 (QTIF…VHHD), and 934 to 940 (PRIYWTH). N-linked (GlcNAc...) asparagine glycosylation occurs at N1022. 5 consecutive LDL-receptor class A domains span residues 1024 to 1063 (TCVEALDCEFRCHSGECLTMNHRCNGRRDCVDNSDEMNCD), 1073 to 1110 (LCSPNQFACHSGEQCVDKERRCDNRKDCHDHSDEQHCE), 1117 to 1153 (KCHVHQHGCDNGKCVDSSLVCDGTNDCGDNSDELLCE), 1157 to 1194 (RCEPGMFQCGSGSCIAGSWECDGRIDCSDGSDEHDKCV), and 1197 to 1233 (SCPPDMQRCLLGQCLDRSLVCDGHNDCGDKSDELNCG). 15 disulfide bridges follow: C1025–C1040, C1035–C1053, C1047–C1062, C1074–C1087, C1081–C1100, C1094–C1109, C1118–C1130, C1125–C1143, C1137–C1152, C1158–C1170, C1165–C1183, C1177–C1193, C1198–C1210, C1205–C1223, and C1217–C1232. N1240 carries an N-linked (GlcNAc...) asparagine glycan. LDL-receptor class A domains are found at residues 1242–1280 (SCAEDQYQCTSNLKICLPSTVRCNGTTECPRGEDEADCG) and 1282–1319 (VCSIYEFKCRSGRECIRREFRCDGQKDCGDGSDELSCE). 6 cysteine pairs are disulfide-bonded: C1243–C1257, C1250–C1270, C1264–C1279, C1283–C1296, C1290–C1309, and C1303–C1318. An N-linked (GlcNAc...) asparagine glycan is attached at N1265. The N-linked (GlcNAc...) asparagine glycan is linked to N1326. Positions 1339–1376 (SCRPHLFDCQDGECVDLSRVCNNFPDCTNGHDEGPKCA) constitute an LDL-receptor class A 13 domain. Disulfide bonds link C1340-C1352, C1347-C1365, C1359-C1375, C1422-C1432, and C1428-C1441. One can recognise an EGF-like 3; calcium-binding domain in the interval 1418 to 1453 (DIDECQEQQPCAQLCENTLGGYQCQCHADFMLRQDR). N-linked (GlcNAc...) asparagine glycans are attached at residues N1475 and N1490. LDL-receptor class B repeat units follow at residues 1588 to 1637 (ARIF…DPHQ) and 1638 to 1687 (QLLY…YENN). Residues 1800–1820 (WLMALFVLAAGSLIAGLGYMY) traverse the membrane as a helical segment. Residues 1821–1984 (YQYRQRGHTD…GNDANARFVS (164 aa)) are Cytoplasmic-facing. S1926 is modified (phosphoserine). 2 disordered regions span residues 1927–1951 (KLHALDGGGAGGDGDGGRGVGRQVP) and 1965–1984 (SAGQFGGNYAGNDANARFVS). A compositionally biased stretch (gly residues) spans 1932–1946 (DGGGAGGDGDGGRGV).

It belongs to the LDLR family. Interacts with osk (isoform A). Ovary.

Its subcellular location is the cell membrane. The protein localises to the cytoplasm. The protein resides in the cell cortex. It localises to the cytoplasmic vesicle. It is found in the clathrin-coated vesicle membrane. Its subcellular location is the early endosome membrane. The protein localises to the endosome. The protein resides in the multivesicular body lumen. Cell surface receptor involved in uptake of vitellogenins (yolk proteins) into developing oocytes by receptor-mediated endocytosis. May also mediate uptake of apolpp/apolipophorins and their incorporation into yolk granules. Along with its ligands, required for maintenance of microtubule plus-end orientation towards the posterior pole of oocytes. Involved in polarized localization of germ plasm components, such as osk mRNA and vas protein, to the oocyte posterior cortex. Receptor-mediated endocytosis of vitellogenin receptor ligands is critical for osk (isoform A) mediated actin reorganization and the anchoring of germ plasm components to the oocyte cortex. In Drosophila melanogaster (Fruit fly), this protein is Vitellogenin receptor Yl.